The primary structure comprises 357 residues: N-acetyl-gamma-glutamyl-phosphate reductase (357 aa).

The active site involves C160.

This sequence belongs to the NAGSA dehydrogenase family. Type 1 subfamily.

The protein localises to the cytoplasm. The enzyme catalyses N-acetyl-L-glutamate 5-semialdehyde + phosphate + NADP(+) = N-acetyl-L-glutamyl 5-phosphate + NADPH + H(+). The protein operates within amino-acid biosynthesis; L-arginine biosynthesis; N(2)-acetyl-L-ornithine from L-glutamate: step 3/4. Catalyzes the NADPH-dependent reduction of N-acetyl-5-glutamyl phosphate to yield N-acetyl-L-glutamate 5-semialdehyde. The sequence is that of N-acetyl-gamma-glutamyl-phosphate reductase from Synechococcus sp. (strain CC9605).